Here is a 464-residue protein sequence, read N- to C-terminus: Serine/threonine-protein kinase 38-like (464 aa).

A2 is subject to N-acetylalanine. Positions 64-89 (KLRRSQHARKETEFLRLKRTRLGLDD) are S100B binding. T75 carries the phosphothreonine modification. In terms of domain architecture, Protein kinase spans 90-383 (FESLKVIGRG…VEEIKGHPFF (294 aa)). ATP contacts are provided by residues 96–104 (IGRGAFGEV) and K119. D213 serves as the catalytic Proton acceptor. S282 bears the Phosphoserine; by autocatalysis mark. The AGC-kinase C-terminal domain maps to 384-453 (EGVDWGHIRE…KRFEGLTQRG (70 aa)). T442 is subject to Phosphothreonine; by STK24/MST3.

Belongs to the protein kinase superfamily. AGC Ser/Thr protein kinase family. In terms of assembly, homodimeric S100B binds two molecules of STK38L. Interacts with MOB1 and MOB2. Interacts with MICAL1; leading to inhibit the protein kinase activity by antagonizing activation by MST1/STK4. The cofactor is Mg(2+). As to expression, highly expressed in the large and small intestine, stomach and testis. High levels also present in the brain, in particular the neurocortex, basal forebrain, hippocampus, the amygdala, cerebellum and brainstem.

It is found in the cytoplasm. Its subcellular location is the cytoskeleton. It localises to the membrane. It catalyses the reaction L-seryl-[protein] + ATP = O-phospho-L-seryl-[protein] + ADP + H(+). It carries out the reaction L-threonyl-[protein] + ATP = O-phospho-L-threonyl-[protein] + ADP + H(+). Its activity is regulated as follows. Activated by binding of S100B which releases autoinhibitory N-lobe interactions, enabling ATP to bind and the autophosphorylation of Ser-282. Thr-442 then undergoes calcium-dependent phosphorylation by STK24/MST3. Interactions between phosphorylated Thr-442 and the N-lobe promote additional structural changes that complete the activation of the kinase. Autoinhibition is also released by the binding of MOB1/MOBKL1A and MOB2 to the N-terminal of STK38L. Functionally, involved in the regulation of structural processes in differentiating and mature neuronal cells. This is Serine/threonine-protein kinase 38-like from Mus musculus (Mouse).